Consider the following 52-residue polypeptide: Ornatin-B (52 aa).

Residues 42–44 carry the Cell attachment site motif; that stretch reads RGD.

This sequence belongs to the ornatin family.

Its subcellular location is the secreted. In terms of biological role, potent inhibitor of fibrinogen interaction with platelet receptors expressed on glycoprotein IIb-IIIa complex. May prevent blood from clotting during either feeding and/or storage of ingested blood. This is Ornatin-B from Placobdella ornata (Turtle leech).